The sequence spans 170 residues: Inner membrane protein p22 (170 aa).

Residues 1–3 are Intravirion-facing; sequence MST. Residues 4–24 form a helical membrane-spanning segment; the sequence is LLIALIALIVLLIIILVVFLY. Topologically, residues 25 to 170 are virion surface; the sequence is YKKQQPPKKV…LYLPRNHKYA (146 aa).

It belongs to the asfivirus inner membrane protein p22 family.

It is found in the virion membrane. Its subcellular location is the host cell membrane. The protein is Inner membrane protein p22 of Ornithodoros (relapsing fever ticks).